The primary structure comprises 1164 residues: Phospholipid-transporting ATPase IA (1164 aa).

Topologically, residues 1 to 75 are cytoplasmic; sequence MPTMRRTVSE…PRFLYSQFRR (75 aa). Serine 25 is modified (phosphoserine). Threonine 28 carries the phosphothreonine modification. Phosphoserine is present on serine 29. The helical transmembrane segment at 76–96 threads the bilayer; it reads AANSFFLFIALLQQIPDVSPT. The Exoplasmic loop segment spans residues 97-100; it reads GRYT. A helical membrane pass occupies residues 101 to 121; the sequence is TLVPLLFILAVAAIKEIIEDI. The Cytoplasmic portion of the chain corresponds to 122–297; that stretch reads KRHKADNAVN…SNVERITNVQ (176 aa). Residues 298-318 traverse the membrane as a helical segment; the sequence is ILILFCILIAMSLVCSVGSAI. At 319–339 the chain is on the exoplasmic loop side; the sequence is WNRRHSGKDWYLHLHYGGASN. A helical transmembrane segment spans residues 340–360; that stretch reads FGLNFLTFIILFNNLIPISLL. Topologically, residues 361-866 are cytoplasmic; the sequence is VTLEVVKFTQ…KCILYCFYKN (506 aa). Residue aspartate 409 is the 4-aspartylphosphate intermediate of the active site. ATP-binding residues include aspartate 409, lysine 410, and threonine 411. Residue aspartate 409 participates in Mg(2+) binding. Threonine 411 is a Mg(2+) binding site. Serine 443 is subject to Phosphoserine. ATP-binding positions include glutamate 508, phenylalanine 549, lysine 572, arginine 605, threonine 685, glycine 686, aspartate 687, 741–748, arginine 775, and lysine 781; that span reads ALIIDGKT. Aspartate 801 provides a ligand contact to Mg(2+). Residues asparagine 804 and aspartate 805 each coordinate ATP. Aspartate 805 contacts Mg(2+). The helical transmembrane segment at 867–887 threads the bilayer; that stretch reads IVLYIIEIWFAFVNGFSGQIL. The Exoplasmic loop segment spans residues 888–890; the sequence is FER. The chain crosses the membrane as a helical span at residues 891–911; the sequence is WCIGLYNVMFTAMPPLTLGIF. Topologically, residues 912–939 are cytoplasmic; sequence ERSCRKENMLKYPELYKTSQNALDFNTK. The helical transmembrane segment at 940 to 960 threads the bilayer; that stretch reads VFWVHCLNGLFHSVILFWFPL. Over 961–977 the chain is Exoplasmic loop; it reads KALQYGTVFGNGKTSDY. The helical transmembrane segment at 978–998 threads the bilayer; that stretch reads LLLGNFVYTFVVITVCLKAGL. At 999–1008 the chain is on the cytoplasmic side; the sequence is ETSYWTWFSH. Residues 1009–1029 traverse the membrane as a helical segment; sequence IAIWGSIALWVVFFGIYSSLW. The Exoplasmic loop portion of the chain corresponds to 1030-1044; sequence PAVPMAPDMSGEAAM. A helical membrane pass occupies residues 1045 to 1065; the sequence is LFSSGVFWVGLLSIPVASLLL. The Cytoplasmic portion of the chain corresponds to 1066-1164; the sequence is DVLYKVIKRT…DTTKQRPDEW (99 aa). 1095-1102 provides a ligand contact to ATP; sequence GAVVLGKS. Serine 1126 is subject to Phosphoserine.

The protein belongs to the cation transport ATPase (P-type) (TC 3.A.3) family. Type IV subfamily. In terms of assembly, component of a P4-ATPase flippase complex which consists of a catalytic alpha subunit and an accessory beta subunit. Interacts with TMEM30A to form a flippase complex; this complex forms an intermediate phosphoenzyme. Interacts with TMEM30B; this interaction is reported conflictingly. Mg(2+) serves as cofactor. Cleaved by calpain in a caspase- and calcium influx-dependent manner only during platelet apoptosis and may lead to inactivation. Found in most tissues except liver and testis. Most abundant in brain and lung. Also detected in fetal tissues. Isoform 1 is expressed in brain. Isoform 2 and isoform 3 are expressed in reticulocytes. Expressed in mouse hippocampus in both dentate gyrus (DG) and the CA3 regions. Expressed in both neuronal as well as non-neuronal cells within the DG. Highly expressed in platelets.

It localises to the cytoplasmic vesicle. Its subcellular location is the secretory vesicle. The protein localises to the chromaffin granule membrane. It is found in the cytoplasmic granule. The protein resides in the cell membrane. It localises to the endoplasmic reticulum. Its subcellular location is the golgi apparatus. The protein localises to the endomembrane system. It carries out the reaction ATP + H2O + phospholipidSide 1 = ADP + phosphate + phospholipidSide 2.. The enzyme catalyses a 1,2-diacyl-sn-glycero-3-phospho-L-serine(out) + ATP + H2O = a 1,2-diacyl-sn-glycero-3-phospho-L-serine(in) + ADP + phosphate + H(+). ATPase activity is stimulated by phosphatidylserine (PS) and minimally by phosphatidylethanolamine (PE). ATPase activity is inhibited by the vanadate and by the presence of calcium. In terms of biological role, catalytic component of a P4-ATPase flippase complex which catalyzes the hydrolysis of ATP coupled to the transport of aminophospholipids from the outer to the inner leaflet of various membranes and ensures the maintenance of asymmetric distribution of phospholipids. Phospholipid translocation also seems to be implicated in vesicle formation and in uptake of lipid signaling molecules. In vitro, its ATPase activity is selectively and stereospecifically stimulated by phosphatidylserine (PS). The flippase complex ATP8A1:TMEM30A seems to play a role in regulation of cell migration probably involving flippase-mediated translocation of phosphatidylethanolamine (PE) at the cell membrane. Acts as aminophospholipid translocase at the cell membrane in neuronal cells; the activity is associated with hippocampus-dependent learning. May play a role in brain connectivity. The protein is Phospholipid-transporting ATPase IA of Mus musculus (Mouse).